A 498-amino-acid chain; its full sequence is Protein adenylyltransferase Fic (498 aa).

A helical membrane pass occupies residues 43–63 (FAFLAFLAGSFLAFSLHALIS). TPR repeat units follow at residues 126–159 (ALSS…APRH) and 160–194 (PEVL…NPSH). The short motif at 251–256 (SVGIEG) is the Inhibitory (S/T)XXXE(G/N) motif element. ATP is bound by residues glutamate 255 and 336 to 339 (VGGH). In terms of domain architecture, Fido spans 305–440 (ITIKDILELH…IRPFVRFIAD (136 aa)). The active site involves histidine 383. Residues 387–394 (DGNGRTSR), 419–420 (YY), and asparagine 427 contribute to the ATP site.

The protein belongs to the fic family. In terms of assembly, homodimer.

The protein localises to the membrane. It catalyses the reaction L-tyrosyl-[protein] + ATP = O-(5'-adenylyl)-L-tyrosyl-[protein] + diphosphate. It carries out the reaction L-threonyl-[protein] + ATP = 3-O-(5'-adenylyl)-L-threonyl-[protein] + diphosphate. The enzyme catalyses 3-O-(5'-adenylyl)-L-threonyl-[protein] + H2O = L-threonyl-[protein] + AMP + H(+). With respect to regulation, the side chain of Glu-255 determines which of the two opposing activities (AMPylase or de-AMPylase) will take place. In response to endoplasmic reticulum stress, mediates de-AMPylase activity. Adenylyltransferase activity is inhibited by the inhibitory helix present at the N-terminus: Glu-255 binds ATP and competes with ATP-binding at Arg-394, thereby preventing adenylyltransferase activity. In unstressed cells, disengagement of Glu-255 promotes adenylyltransferase activity. Activation dissociates ATP-binding from Glu-255, allowing ordered binding of the entire ATP moiety with the alpha-phosphate in an orientation that is productive for accepting an incoming target hydroxyl side chain. Its function is as follows. Protein that can both mediate the addition of adenosine 5'-monophosphate (AMP) to specific residues of target proteins (AMPylation), and the removal of the same modification from target proteins (de-AMPylation), depending on the context. The side chain of Glu-255 determines which of the two opposing activities (AMPylase or de-AMPylase) will take place. Acts as a key regulator of the unfolded protein response (UPR) by mediating AMPylation or de-AMPylation of Hsc70-3/BiP. In unstressed cells, acts as an adenylyltransferase by mediating AMPylation of Hsc70-3/BiP at 'Thr-518', thereby inactivating it. In response to endoplasmic reticulum stress, acts as a phosphodiesterase by mediating removal of ATP (de-AMPylation) from Hsc70-3/BiP at 'Thr-518', leading to restore HSPA5/BiP activity. This Drosophila willistoni (Fruit fly) protein is Protein adenylyltransferase Fic.